Consider the following 248-residue polypeptide: Large ribosomal subunit protein uL30 (248 aa).

Residue M1 is modified to N-acetylmethionine. 4 repeat units span residues 7 to 18 (KKKKVPAVPETL), 19 to 30 (KKKRKNFAELKI), 31 to 42 (KRLRKKFAQKML), and 43 to 54 (RKARRKLIYEKA). The segment at 7–54 (KKKKVPAVPETLKKKRKNFAELKIKRLRKKFAQKMLRKARRKLIYEKA) is 4 X 12 AA tandem repeats. Position 17 is a phosphothreonine (T17). K124 is subject to N6-acetyllysine. K127 is subject to N6-succinyllysine. Phosphotyrosine is present on Y139.

The protein belongs to the universal ribosomal protein uL30 family. Component of the large ribosomal subunit. Homodimer. Interacts with DHX33.

It is found in the cytoplasm. Component of the large ribosomal subunit. The ribosome is a large ribonucleoprotein complex responsible for the synthesis of proteins in the cell. Binds to G-rich structures in 28S rRNA and in mRNAs. Plays a regulatory role in the translation apparatus; inhibits cell-free translation of mRNAs. In Bos taurus (Bovine), this protein is Large ribosomal subunit protein uL30 (RPL7).